Here is a 251-residue protein sequence, read N- to C-terminus: Pyrroloquinoline-quinone synthase (251 aa).

Belongs to the PqqC family.

The catalysed reaction is 6-(2-amino-2-carboxyethyl)-7,8-dioxo-1,2,3,4,7,8-hexahydroquinoline-2,4-dicarboxylate + 3 O2 = pyrroloquinoline quinone + 2 H2O2 + 2 H2O + H(+). The protein operates within cofactor biosynthesis; pyrroloquinoline quinone biosynthesis. Its function is as follows. Ring cyclization and eight-electron oxidation of 3a-(2-amino-2-carboxyethyl)-4,5-dioxo-4,5,6,7,8,9-hexahydroquinoline-7,9-dicarboxylic-acid to PQQ. This is Pyrroloquinoline-quinone synthase from Cronobacter sakazakii (strain ATCC BAA-894) (Enterobacter sakazakii).